A 145-amino-acid chain; its full sequence is Deoxyuridine 5'-triphosphate nucleotidohydrolase (145 aa).

Residues 62–64 (RSG), Asn75, 79–81 (TVD), and Lys89 each bind substrate.

Belongs to the dUTPase family. Mg(2+) is required as a cofactor.

The catalysed reaction is dUTP + H2O = dUMP + diphosphate + H(+). It functions in the pathway pyrimidine metabolism; dUMP biosynthesis; dUMP from dCTP (dUTP route): step 2/2. In terms of biological role, this enzyme is involved in nucleotide metabolism: it produces dUMP, the immediate precursor of thymidine nucleotides and it decreases the intracellular concentration of dUTP so that uracil cannot be incorporated into DNA. This chain is Deoxyuridine 5'-triphosphate nucleotidohydrolase, found in Helicobacter pylori (strain J99 / ATCC 700824) (Campylobacter pylori J99).